The chain runs to 376 residues: Beta sliding clamp (376 aa).

Belongs to the beta sliding clamp family. Forms a ring-shaped head-to-tail homodimer around DNA which binds and tethers DNA polymerases and other proteins to the DNA. The DNA replisome complex has a single clamp-loading complex (3 tau and 1 each of delta, delta', psi and chi subunits) which binds 3 Pol III cores (1 core on the leading strand and 2 on the lagging strand) each with a beta sliding clamp dimer. Additional proteins in the replisome are other copies of gamma, psi and chi, Ssb, DNA helicase and RNA primase.

It localises to the cytoplasm. Functionally, confers DNA tethering and processivity to DNA polymerases and other proteins. Acts as a clamp, forming a ring around DNA (a reaction catalyzed by the clamp-loading complex) which diffuses in an ATP-independent manner freely and bidirectionally along dsDNA. Initially characterized for its ability to contact the catalytic subunit of DNA polymerase III (Pol III), a complex, multichain enzyme responsible for most of the replicative synthesis in bacteria; Pol III exhibits 3'-5' exonuclease proofreading activity. The beta chain is required for initiation of replication as well as for processivity of DNA replication. The protein is Beta sliding clamp (dnaN) of Streptomyces coelicolor (strain ATCC BAA-471 / A3(2) / M145).